Here is a 152-residue protein sequence, read N- to C-terminus: Ribosomal RNA large subunit methyltransferase H (152 aa).

S-adenosyl-L-methionine is bound by residues Leu-69, Gly-96, and 118-123 (FGKLTF).

It belongs to the RNA methyltransferase RlmH family. In terms of assembly, homodimer.

The protein localises to the cytoplasm. It carries out the reaction pseudouridine(1915) in 23S rRNA + S-adenosyl-L-methionine = N(3)-methylpseudouridine(1915) in 23S rRNA + S-adenosyl-L-homocysteine + H(+). Functionally, specifically methylates the pseudouridine at position 1915 (m3Psi1915) in 23S rRNA. The protein is Ribosomal RNA large subunit methyltransferase H of Mesomycoplasma hyopneumoniae (strain 7448) (Mycoplasma hyopneumoniae).